The sequence spans 317 residues: tRNA pseudouridine synthase B (317 aa).

Residue Asp-47 is the Nucleophile of the active site.

This sequence belongs to the pseudouridine synthase TruB family. Type 1 subfamily.

It carries out the reaction uridine(55) in tRNA = pseudouridine(55) in tRNA. Responsible for synthesis of pseudouridine from uracil-55 in the psi GC loop of transfer RNAs. In Shewanella woodyi (strain ATCC 51908 / MS32), this protein is tRNA pseudouridine synthase B.